We begin with the raw amino-acid sequence, 309 residues long: Protein lifeguard 3 (309 aa).

2 disordered regions span residues 1–31 (MSNP…QPSV) and 64–84 (PMNY…SFRP). Residues 70–84 (DYNEEERAGSDSFRP) show a composition bias toward basic and acidic residues. A phosphoserine mark is found at serine 79 and serine 81. The next 7 membrane-spanning stretches (helical) occupy residues 101 to 121 (YCII…FTFV), 132 to 152 (VAVY…LACC), 163 to 183 (IILL…ISSM), 188 to 208 (AVII…IFCF), 221 to 241 (FCVL…VLIF), 244 to 264 (IYWL…LFLA), and 286 to 306 (GALQ…QLVG).

This sequence belongs to the BI1 family. LFG subfamily. As to expression, expressed in most tissues except spleen, thymus and testis.

It is found in the membrane. The protein resides in the lysosome membrane. Its subcellular location is the endosome membrane. Negatively regulates aortic matrix metalloproteinase-9 (MMP9) production and may play a protective role in vascular remodeling. This Mus musculus (Mouse) protein is Protein lifeguard 3 (Tmbim1).